We begin with the raw amino-acid sequence, 164 residues long: UPF0304 protein YE1336 (164 aa).

This sequence belongs to the UPF0304 family.

The chain is UPF0304 protein YE1336 from Yersinia enterocolitica serotype O:8 / biotype 1B (strain NCTC 13174 / 8081).